The sequence spans 122 residues: Large ribosomal subunit protein uL14 (122 aa).

The protein belongs to the universal ribosomal protein uL14 family. As to quaternary structure, part of the 50S ribosomal subunit. Forms a cluster with proteins L3 and L19. In the 70S ribosome, L14 and L19 interact and together make contacts with the 16S rRNA in bridges B5 and B8.

In terms of biological role, binds to 23S rRNA. Forms part of two intersubunit bridges in the 70S ribosome. This Neisseria gonorrhoeae (strain ATCC 700825 / FA 1090) protein is Large ribosomal subunit protein uL14.